The following is an 861-amino-acid chain: Leucine--tRNA ligase (861 aa).

Residues 42–52 carry the 'HIGH' region motif; it reads PYPSGKLHMGH. Residues 618-622 carry the 'KMSKS' region motif; that stretch reads KMSKS. An ATP-binding site is contributed by Lys621.

Belongs to the class-I aminoacyl-tRNA synthetase family.

It is found in the cytoplasm. The enzyme catalyses tRNA(Leu) + L-leucine + ATP = L-leucyl-tRNA(Leu) + AMP + diphosphate. The polypeptide is Leucine--tRNA ligase (Buchnera aphidicola subsp. Baizongia pistaciae (strain Bp)).